The primary structure comprises 378 residues: Fetuin-B (378 aa).

The first 18 residues, 1-18 (MGVLRLLVLCTLAACCVA), serve as a signal peptide directing secretion. 2 consecutive Cystatin fetuin-B-type domains span residues 28-141 (NAPF…YNCT) and 152-261 (SMCP…VSCE). N-linked (GlcNAc...) asparagine glycosylation occurs at N40. Cystine bridges form between C96-C107, C120-C140, C154-C157, C217-C224, and C237-C260. A glycan (N-linked (GlcNAc...) asparagine) is linked at N139. 2 disordered regions span residues 266–338 (QDQV…PQGD) and 357–378 (LPFPGKEQRSPECPGPEKQRTP). The span at 286 to 297 (QKNTAPTSSPSI) shows a compositional bias: polar residues. T289 and T292 each carry an O-linked (GalNAc...) threonine glycan. At S316 the chain carries Phosphoserine. The span at 362–378 (KEQRSPECPGPEKQRTP) shows a compositional bias: basic and acidic residues.

This sequence belongs to the fetuin family. Liver.

The protein resides in the secreted. In terms of biological role, protease inhibitor required for egg fertilization. Required to prevent premature zona pellucida hardening before fertilization, probably by inhibiting the protease activity of ASTL, a protease that mediates the cleavage of ZP2 and triggers zona pellucida hardening. The polypeptide is Fetuin-B (Fetub) (Rattus norvegicus (Rat)).